Here is a 492-residue protein sequence, read N- to C-terminus: Ketol-acid reductoisomerase (NADP(+)) (492 aa).

One can recognise a KARI N-terminal Rossmann domain in the interval 15–208 (AQLGKCRFMA…GGHRAGVLES (194 aa)). NADP(+)-binding positions include 45–48 (CGAQ), arginine 68, arginine 76, serine 78, and 108–110 (DKQ). Residue histidine 132 is part of the active site. Residue glycine 158 coordinates NADP(+). KARI C-terminal knotted domains follow at residues 209 to 344 (SFVA…TAAQ) and 345 to 485 (FEGK…MTDM). Residues aspartate 217, glutamate 221, glutamate 389, and glutamate 393 each coordinate Mg(2+). Serine 414 contacts substrate.

The protein belongs to the ketol-acid reductoisomerase family. The cofactor is Mg(2+).

It catalyses the reaction (2R)-2,3-dihydroxy-3-methylbutanoate + NADP(+) = (2S)-2-acetolactate + NADPH + H(+). The enzyme catalyses (2R,3R)-2,3-dihydroxy-3-methylpentanoate + NADP(+) = (S)-2-ethyl-2-hydroxy-3-oxobutanoate + NADPH + H(+). It functions in the pathway amino-acid biosynthesis; L-isoleucine biosynthesis; L-isoleucine from 2-oxobutanoate: step 2/4. Its pathway is amino-acid biosynthesis; L-valine biosynthesis; L-valine from pyruvate: step 2/4. In terms of biological role, involved in the biosynthesis of branched-chain amino acids (BCAA). Catalyzes an alkyl-migration followed by a ketol-acid reduction of (S)-2-acetolactate (S2AL) to yield (R)-2,3-dihydroxy-isovalerate. In the isomerase reaction, S2AL is rearranged via a Mg-dependent methyl migration to produce 3-hydroxy-3-methyl-2-ketobutyrate (HMKB). In the reductase reaction, this 2-ketoacid undergoes a metal-dependent reduction by NADPH to yield (R)-2,3-dihydroxy-isovalerate. The protein is Ketol-acid reductoisomerase (NADP(+)) of Erwinia tasmaniensis (strain DSM 17950 / CFBP 7177 / CIP 109463 / NCPPB 4357 / Et1/99).